Here is a 56-residue protein sequence, read N- to C-terminus: Potassium channel toxin alpha-KTx 9.8 (56 aa).

The first 19 residues, 1–19 (MSRLFTLVLIVLAMNVMMA), serve as a signal peptide directing secretion. Positions 20–28 (IISDPVVEA) are excised as a propeptide. Disulfide bonds link Cys-31-Cys-47, Cys-34-Cys-52, and Cys-38-Cys-54.

It belongs to the short scorpion toxin superfamily. Potassium channel inhibitor family. Alpha-KTx 09 subfamily. Expressed by the venom gland.

It localises to the secreted. In terms of biological role, potassium channel inhibitor. The polypeptide is Potassium channel toxin alpha-KTx 9.8 (Buthus israelis (Israeli scorpion)).